A 329-amino-acid chain; its full sequence is Quinate dehydrogenase (329 aa).

It catalyses the reaction L-quinate + NAD(+) = 3-dehydroquinate + NADH + H(+). The protein operates within aromatic compound metabolism; 3,4-dihydroxybenzoate biosynthesis; 3-dehydroquinate from D-quinate (NAD(+) route): step 1/1. This is Quinate dehydrogenase (qutB) from Emericella nidulans (strain FGSC A4 / ATCC 38163 / CBS 112.46 / NRRL 194 / M139) (Aspergillus nidulans).